A 150-amino-acid chain; its full sequence is Geranyl diphosphate phosphohydrolase (150 aa).

The 134-residue stretch at 14-147 (SIKVAVVVCL…DNVVQDGFNP (134 aa)) folds into the Nudix hydrolase domain. Residues 48 to 69 (GHLEFGESFEECAARELKEETD) carry the Nudix box motif. Mg(2+) is bound by residues Glu-63 and Glu-67.

Belongs to the Nudix hydrolase family. As to expression, expressed in petals. Little or no expression in stamens, sepals or young leaves.

The protein localises to the cytoplasm. It carries out the reaction (2E)-geranyl diphosphate + H2O = (2E)-geranyl phosphate + phosphate + H(+). Involved in a cytosolic pathway for the biosynthesis of free monoterpene alcohols that contribute to fragrance. Lacks terpene synthase activity, but has a diphosphohydrolase activity with geranyl diphosphate and farnesyl diphosphate as substrates. No activity with 8-oxo-dGTP and dGTP and unable to dephosphorylate geranyl phosphate to geraniol. The polypeptide is Geranyl diphosphate phosphohydrolase (Rosa hybrid cultivar).